The following is a 219-amino-acid chain: Izumo sperm-egg fusion protein 4 (219 aa).

Residues 1 to 15 (MALLLCLVGVTAALA) form the signal peptide. Residue asparagine 206 is glycosylated (N-linked (GlcNAc...) asparagine).

The protein belongs to the Izumo family.

Its subcellular location is the secreted. This chain is Izumo sperm-egg fusion protein 4 (IZUMO4), found in Macaca fascicularis (Crab-eating macaque).